The following is an 89-amino-acid chain: Large ribosomal subunit protein bL27 (89 aa).

Belongs to the bacterial ribosomal protein bL27 family.

This chain is Large ribosomal subunit protein bL27, found in Ruegeria sp. (strain TM1040) (Silicibacter sp.).